Consider the following 527-residue polypeptide: Gustatory receptor for bitter taste 66a (527 aa).

The Cytoplasmic portion of the chain corresponds to 1–46; it reads MAQAEDAVQPLLQQFQQLFFISKIAGILPQDLEKFRSRNLLEKSRN. Residues 47-67 traverse the membrane as a helical segment; sequence GMIYMLSTLILYVVLYNILIY. The Extracellular portion of the chain corresponds to 68–80; the sequence is SFGEEDRSLKASQ. Residues 81 to 101 form a helical membrane-spanning segment; the sequence is STLTFVIGLFLTYIGLIMMVS. At 102-144 the chain is on the cytoplasmic side; that stretch reads DQLTALRNQGRIGELYERIRLVDERLYKEGCVMDNSTIGRRIR. A helical transmembrane segment spans residues 145 to 165; that stretch reads IMLIMTVIFELSILVSTYVKL. Over 166–174 the chain is Extracellular; sequence VDYSQWMSL. Residues 175–195 form a helical membrane-spanning segment; sequence LWIVSAIPTFINTLDKIWFAV. The Cytoplasmic portion of the chain corresponds to 196–345; the sequence is SLYALKERFE…KALNELWSYP (150 aa). A helical transmembrane segment spans residues 346-366; the sequence is ILSLMAYGFLIFTAQLYFLYC. Residues 367–382 lie on the Extracellular side of the membrane; it reads ATQYQSIPSLFRSAKN. The chain crosses the membrane as a helical span at residues 383 to 403; it reads PFITVIVLSYTSGKCVYLIYL. The Cytoplasmic portion of the chain corresponds to 404-460; it reads SWKTSQASKRTGISLHKCGVVADDNLLYEIVNHLSLKLLNHSVDFSACGFFTLDMET. A helical transmembrane segment spans residues 461–481; sequence LYGVSGGITSYLIILIQFNLA. The Extracellular segment spans residues 482-527; sequence AQQAKEAIQTFNSLNDTAGLVGAATDMDNISSTLRDFVTTTMTPAV. N-linked (GlcNAc...) asparagine glycans are attached at residues N496 and N510.

Belongs to the insect chemoreceptor superfamily. Gustatory receptor (GR) family. Gr66a subfamily. Taste hairs in labial palps, labral and cibarial sense organs and forelegs. In larvae, is expressed in neurons of the terminal external chemosensory organ, as well as in the dorsal, ventral, and posterior pharyngeal sense organs.

The protein localises to the cell membrane. In terms of biological role, gustatory receptor required for response to the bitter in taste neurons. Gr66a cells respond to bitter compounds such as caffeine, theophylline, threonine or valine. Flies avoid bitter substances, suggesting that Gr66a neuron activity is sufficient to mediate avoidance behavior. Required for sensing and avoiding N,N-Diethyl-meta-toluamide (DEET), the most widely used insect repellent worldwide, as well as to L-canavanine, a plant-derived insecticide. Gr66a neurons are also involved in the sex-specific perception of molecules inducing male avoidance behavior, probably through sensing 7-tricosene (7-T), a male cuticular pheromone and leading to inhibition of male-male courtship. Finally, also plays a role in oviposition behavior, in which females evaluate their environment and choose to lay eggs on substrates they may find aversive in other contexts. The protein is Gustatory receptor for bitter taste 66a (Gr66a) of Drosophila melanogaster (Fruit fly).